Consider the following 306-residue polypeptide: D-alanine--D-alanine ligase (306 aa).

The ATP-grasp domain occupies 107–303 (KHLFKSAGLS…FEQLVVRILE (197 aa)). 134-189 (IMQQFKKVMVKPSHEGSSIGMAQASTPQELEDALSNAFKFDSQVLVEQWISGREFT) contacts ATP. Mg(2+)-binding residues include Asp257, Glu270, and Asn272.

Belongs to the D-alanine--D-alanine ligase family. Mg(2+) serves as cofactor. Requires Mn(2+) as cofactor.

The protein localises to the cytoplasm. The catalysed reaction is 2 D-alanine + ATP = D-alanyl-D-alanine + ADP + phosphate + H(+). The protein operates within cell wall biogenesis; peptidoglycan biosynthesis. Functionally, cell wall formation. The sequence is that of D-alanine--D-alanine ligase from Pseudoalteromonas translucida (strain TAC 125).